Reading from the N-terminus, the 371-residue chain is Opine oxidase subunit B (371 aa).

Heterodimer of a subunit A and a subunit B.

The protein operates within opine metabolism; octopine degradation. Its function is as follows. Oxidative cleavage of octopine into L-arginine and pyruvate. This is Opine oxidase subunit B (ooxB) from Agrobacterium tumefaciens (strain Ach5).